A 223-amino-acid polypeptide reads, in one-letter code: Neurotrophic factor BDNF precursor form (223 aa).

The signal sequence occupies residues 1-5 (SCMKA). Residues 6–114 (APMKEVSIRG…AANMSMRVRR (109 aa)) constitute a propeptide that is removed on maturation. Residue N107 is glycosylated (N-linked (GlcNAc...) asparagine). 2 disulfide bridges follow: C127–C194 and C172–C223.

It belongs to the NGF-beta family.

It is found in the secreted. Its function is as follows. Promotes the survival of neuronal populations that are all located either in the central nervous system or directly connected to it. The polypeptide is Neurotrophic factor BDNF precursor form (BDNF) (Candoia carinata (Papuan tree boa)).